The following is a 304-amino-acid chain: Porphobilinogen deaminase (304 aa).

Cys-239 is modified (S-(dipyrrolylmethanemethyl)cysteine).

The protein belongs to the HMBS family. In terms of assembly, monomer. Requires dipyrromethane as cofactor.

The enzyme catalyses 4 porphobilinogen + H2O = hydroxymethylbilane + 4 NH4(+). Its pathway is porphyrin-containing compound metabolism; protoporphyrin-IX biosynthesis; coproporphyrinogen-III from 5-aminolevulinate: step 2/4. Functionally, tetrapolymerization of the monopyrrole PBG into the hydroxymethylbilane pre-uroporphyrinogen in several discrete steps. This is Porphobilinogen deaminase from Brucella ovis (strain ATCC 25840 / 63/290 / NCTC 10512).